The chain runs to 455 residues: Bifunctional protein GlmU (455 aa).

Residues 1–227 form a pyrophosphorylase region; it reads MLTDIVILAA…ATEALGVNDP (227 aa). UDP-N-acetyl-alpha-D-glucosamine-binding positions include 8–11, Lys22, Gln73, 78–79, 100–102, Gly137, Glu152, Asn167, and Asn225; these read LAAG, GT, and YGD. Asp102 is a binding site for Mg(2+). Asn225 contributes to the Mg(2+) binding site. Positions 228 to 248 are linker; the sequence is VQLAILERVFQRQQLRALQMQ. The N-acetyltransferase stretch occupies residues 249–455; that stretch reads GLRVADPARV…HWQRPRRDKK (207 aa). Residues Arg331 and Lys349 each contribute to the UDP-N-acetyl-alpha-D-glucosamine site. Catalysis depends on His361, which acts as the Proton acceptor. The UDP-N-acetyl-alpha-D-glucosamine site is built by Tyr364 and Asn375. Acetyl-CoA-binding positions include Ala378, 384–385, Ser403, Ala421, and Arg438; that span reads NY. The tract at residues 420 to 455 is disordered; the sequence is GAGSTITKEVPPGGLTLSRSPQRTIPHWQRPRRDKK.

The protein in the N-terminal section; belongs to the N-acetylglucosamine-1-phosphate uridyltransferase family. In the C-terminal section; belongs to the transferase hexapeptide repeat family. As to quaternary structure, homotrimer. Mg(2+) is required as a cofactor.

Its subcellular location is the cytoplasm. It carries out the reaction alpha-D-glucosamine 1-phosphate + acetyl-CoA = N-acetyl-alpha-D-glucosamine 1-phosphate + CoA + H(+). The enzyme catalyses N-acetyl-alpha-D-glucosamine 1-phosphate + UTP + H(+) = UDP-N-acetyl-alpha-D-glucosamine + diphosphate. It participates in nucleotide-sugar biosynthesis; UDP-N-acetyl-alpha-D-glucosamine biosynthesis; N-acetyl-alpha-D-glucosamine 1-phosphate from alpha-D-glucosamine 6-phosphate (route II): step 2/2. The protein operates within nucleotide-sugar biosynthesis; UDP-N-acetyl-alpha-D-glucosamine biosynthesis; UDP-N-acetyl-alpha-D-glucosamine from N-acetyl-alpha-D-glucosamine 1-phosphate: step 1/1. It functions in the pathway bacterial outer membrane biogenesis; LPS lipid A biosynthesis. Functionally, catalyzes the last two sequential reactions in the de novo biosynthetic pathway for UDP-N-acetylglucosamine (UDP-GlcNAc). The C-terminal domain catalyzes the transfer of acetyl group from acetyl coenzyme A to glucosamine-1-phosphate (GlcN-1-P) to produce N-acetylglucosamine-1-phosphate (GlcNAc-1-P), which is converted into UDP-GlcNAc by the transfer of uridine 5-monophosphate (from uridine 5-triphosphate), a reaction catalyzed by the N-terminal domain. The sequence is that of Bifunctional protein GlmU from Acidithiobacillus ferrooxidans (strain ATCC 23270 / DSM 14882 / CIP 104768 / NCIMB 8455) (Ferrobacillus ferrooxidans (strain ATCC 23270)).